The primary structure comprises 334 residues: MLNTLIVGASGYAGAELVSYVNRHPHMTITALTVSAQSNDAGKLISDLHPQLKGIVDLPLQPMSDVRDFSADVDVVFLATAHEVSHDLAPQFLQAGCVVFDLSGAFRVNDRAFYEKYYGFTHQYPELLEQAVYGLAEWNADKLNTANLIAVPGCYPTAAQLSLKPLIDGGLLDLTQWPVINATSGVSGAGRKAAISNSFCEVSLQPYGVFTHRHQPEIAAHLGAEVIFTPHLGNFPRGILETITCRLKAGVTHAQVADVLQKAYGDKPLVRLYDKGVPALKNVVGLPFCDIGFAVQGEHLIVVATEDNLLKGAAAQAVQCANIRFGFAETQSLI.

Cys154 is an active-site residue.

This sequence belongs to the NAGSA dehydrogenase family. Type 1 subfamily.

It localises to the cytoplasm. It carries out the reaction N-acetyl-L-glutamate 5-semialdehyde + phosphate + NADP(+) = N-acetyl-L-glutamyl 5-phosphate + NADPH + H(+). It functions in the pathway amino-acid biosynthesis; L-arginine biosynthesis; N(2)-acetyl-L-ornithine from L-glutamate: step 3/4. Its function is as follows. Catalyzes the NADPH-dependent reduction of N-acetyl-5-glutamyl phosphate to yield N-acetyl-L-glutamate 5-semialdehyde. This Salmonella typhi protein is N-acetyl-gamma-glutamyl-phosphate reductase.